We begin with the raw amino-acid sequence, 366 residues long: Ribosomal RNA large subunit methyltransferase M (366 aa).

S-adenosyl-L-methionine-binding positions include S188, 221–224 (CPGG), D240, D260, and D277. K306 functions as the Proton acceptor in the catalytic mechanism.

This sequence belongs to the class I-like SAM-binding methyltransferase superfamily. RNA methyltransferase RlmE family. RlmM subfamily. As to quaternary structure, monomer.

It localises to the cytoplasm. It carries out the reaction cytidine(2498) in 23S rRNA + S-adenosyl-L-methionine = 2'-O-methylcytidine(2498) in 23S rRNA + S-adenosyl-L-homocysteine + H(+). Catalyzes the 2'-O-methylation at nucleotide C2498 in 23S rRNA. The sequence is that of Ribosomal RNA large subunit methyltransferase M from Salmonella paratyphi C (strain RKS4594).